The following is an 823-amino-acid chain: DNA ligase (823 aa).

NAD(+) contacts are provided by residues 32-36 (DAEYD), 81-82 (SL), and Glu121. Catalysis depends on Lys123, which acts as the N6-AMP-lysine intermediate. NAD(+)-binding residues include Arg144, Glu181, Lys299, and Lys323. Zn(2+) contacts are provided by Cys449, Cys452, Cys467, and Cys473. The tract at residues 528 to 558 (ETADKGSSENENGDAETVSGDLSKYNTQNGK) is disordered. The region spanning 746–823 (GINKAVAGKT…SEAELLTLLC (78 aa)) is the BRCT domain.

It belongs to the NAD-dependent DNA ligase family. LigA subfamily. Mg(2+) serves as cofactor. It depends on Mn(2+) as a cofactor.

The enzyme catalyses NAD(+) + (deoxyribonucleotide)n-3'-hydroxyl + 5'-phospho-(deoxyribonucleotide)m = (deoxyribonucleotide)n+m + AMP + beta-nicotinamide D-nucleotide.. Functionally, DNA ligase that catalyzes the formation of phosphodiester linkages between 5'-phosphoryl and 3'-hydroxyl groups in double-stranded DNA using NAD as a coenzyme and as the energy source for the reaction. It is essential for DNA replication and repair of damaged DNA. The polypeptide is DNA ligase (Neisseria gonorrhoeae (strain NCCP11945)).